We begin with the raw amino-acid sequence, 138 residues long: D-ribose pyranase (138 aa).

The active-site Proton donor is H20. Substrate-binding positions include D28, H105, and 127–129 (YAN).

The protein belongs to the RbsD / FucU family. RbsD subfamily. In terms of assembly, homodecamer.

The protein resides in the cytoplasm. The catalysed reaction is beta-D-ribopyranose = beta-D-ribofuranose. The protein operates within carbohydrate metabolism; D-ribose degradation; D-ribose 5-phosphate from beta-D-ribopyranose: step 1/2. Functionally, catalyzes the interconversion of beta-pyran and beta-furan forms of D-ribose. This Psychromonas ingrahamii (strain DSM 17664 / CCUG 51855 / 37) protein is D-ribose pyranase.